We begin with the raw amino-acid sequence, 771 residues long: DNA helicase/primase complex-associated protein (771 aa).

The protein belongs to the herpesviridae HEPA family. In terms of assembly, associates with the primase and the helicase to form the helicase-primase complex. Interacts with the origin-binding protein. Interacts with the polymerase catalytic subunit.

It is found in the host nucleus. In terms of biological role, component of the helicase/primase complex. Unwinds the DNA at the replication forks and generates single-stranded DNA for both leading and lagging strand synthesis. The primase synthesizes short RNA primers on the lagging strand that the polymerase presumably elongates using dNTPs. The primase-associated factor has no known catalytic activity in the complex and may serve to facilitate the formation of the replisome by directly interacting with the origin-binding protein and the polymerase. This chain is DNA helicase/primase complex-associated protein, found in Homo sapiens (Human).